The following is a 344-amino-acid chain: Phosphoribosylformylglycinamidine cyclo-ligase (344 aa).

The protein belongs to the AIR synthase family.

The protein resides in the cytoplasm. The catalysed reaction is 2-formamido-N(1)-(5-O-phospho-beta-D-ribosyl)acetamidine + ATP = 5-amino-1-(5-phospho-beta-D-ribosyl)imidazole + ADP + phosphate + H(+). The protein operates within purine metabolism; IMP biosynthesis via de novo pathway; 5-amino-1-(5-phospho-D-ribosyl)imidazole from N(2)-formyl-N(1)-(5-phospho-D-ribosyl)glycinamide: step 2/2. This chain is Phosphoribosylformylglycinamidine cyclo-ligase, found in Synechococcus sp. (strain RCC307).